Consider the following 142-residue polypeptide: ATP synthase epsilon chain (142 aa).

This sequence belongs to the ATPase epsilon chain family. F-type ATPases have 2 components, CF(1) - the catalytic core - and CF(0) - the membrane proton channel. CF(1) has five subunits: alpha(3), beta(3), gamma(1), delta(1), epsilon(1). CF(0) has three main subunits: a, b and c.

It localises to the cell inner membrane. Functionally, produces ATP from ADP in the presence of a proton gradient across the membrane. The sequence is that of ATP synthase epsilon chain from Shewanella woodyi (strain ATCC 51908 / MS32).